A 272-amino-acid chain; its full sequence is Protein STAY-GREEN 1, chloroplastic (272 aa).

The transit peptide at 1–50 directs the protein to the chloroplast; sequence MGTLTTSLVVPSKLNNEQQSSIFIHKTRRKCKKNQSIVPVARLFGPAIFE. The tract at residues 201-222 is disordered; sequence TSPSSSSGGVGGVKSTSFTSNS.

It belongs to the staygreen family. As to quaternary structure, interacts with PSY1.

It localises to the plastid. The protein localises to the chloroplast. Required to trigger chlorophyll degradation during leaf senescence and fruit ripening. Binds directly PSY1 to regulate the accumulation of lycopene and beta-carotene in the maturing fruits. The chain is Protein STAY-GREEN 1, chloroplastic from Solanum lycopersicum (Tomato).